The chain runs to 640 residues: Endoglucanase 1 (640 aa).

Positions 1 to 24 are cleaved as a signal peptide; sequence MARRGGAAASSSMANLLGVALVLA. The Nucleophile role is filled by aspartate 94. Residues histidine 433, aspartate 485, and glutamate 494 contribute to the active site. N-linked (GlcNAc...) asparagine glycans are attached at residues asparagine 528 and asparagine 548.

This sequence belongs to the glycosyl hydrolase 9 (cellulase E) family. In terms of tissue distribution, expressed in roots, leaf sheaths and flowers.

It is found in the secreted. It carries out the reaction Endohydrolysis of (1-&gt;4)-beta-D-glucosidic linkages in cellulose, lichenin and cereal beta-D-glucans.. This is Endoglucanase 1 (GLU7) from Oryza sativa subsp. japonica (Rice).